A 70-amino-acid polypeptide reads, in one-letter code: MISLPGVYLNEDDYNFDIALRRFKKQVEKAGILSEMKKRQHYEKPSVMRKKKKAAARKRLLKKIRKMNMA.

Belongs to the bacterial ribosomal protein bS21 family.

The chain is Small ribosomal subunit protein bS21 from Nitratidesulfovibrio vulgaris (strain ATCC 29579 / DSM 644 / CCUG 34227 / NCIMB 8303 / VKM B-1760 / Hildenborough) (Desulfovibrio vulgaris).